The primary structure comprises 158 residues: Complexin-3 (158 aa).

The disordered stretch occupies residues 14-47 (KNLTGSLGGGEDKGDGDKSAAEAQGMSREEYEEY). The span at 23-33 (GEDKGDGDKSA) shows a compositional bias: basic and acidic residues. Residues 39–74 (MSREEYEEYQKQLVEEKMERDAQFTQRKAERATLRS) adopt a coiled-coil conformation. Residue Cys155 is modified to Cysteine methyl ester. The S-farnesyl cysteine moiety is linked to residue Cys155. Residues 156 to 158 (HIM) constitute a propeptide, removed in mature form.

The protein belongs to the complexin/synaphin family. Binds to the SNARE core complex containing SNAP25, VAMP2 and STX1A. Farnesylation mediates presynaptic targeting. In terms of tissue distribution, present in many brain regions, including hippocampus and cerebellum (at protein level). Expressed in the retina (at protein level). Expressed in retinal amacrine cells (at protein level). Expressed in retinal photoreceptor ribbon synapses. Expressed in the retinal inner nuclear layer, at bipolar cells (at protein level). Expressed in cone photoreceptor synaptic terminals (at protein level).

It is found in the synapse. The protein localises to the cell membrane. In terms of biological role, complexin that regulates SNARE protein complex-mediated synaptic vesicle fusion. Required for the maintenance of synaptic ultrastructure in the adult retina. Positively regulates synaptic transmission through synaptic vesicle availability and exocytosis of neurotransmitters at photoreceptor ribbon synapses in the retina. Suppresses tonic photoreceptor activity and baseline 'noise' by suppression of Ca(2+) vesicle tonic release and the facilitation of evoked synchronous and asynchronous Ca(2+) vesicle release. The chain is Complexin-3 (Cplx3) from Mus musculus (Mouse).